The chain runs to 129 residues: Small ribosomal subunit protein uS11 (129 aa).

Belongs to the universal ribosomal protein uS11 family. As to quaternary structure, part of the 30S ribosomal subunit. Interacts with proteins S7 and S18. Binds to IF-3.

Functionally, located on the platform of the 30S subunit, it bridges several disparate RNA helices of the 16S rRNA. Forms part of the Shine-Dalgarno cleft in the 70S ribosome. This Glaesserella parasuis serovar 5 (strain SH0165) (Haemophilus parasuis) protein is Small ribosomal subunit protein uS11.